A 223-amino-acid chain; its full sequence is GTP cyclohydrolase 1 (223 aa).

Positions 114, 117, and 185 each coordinate Zn(2+).

Belongs to the GTP cyclohydrolase I family. In terms of assembly, homomer.

The enzyme catalyses GTP + H2O = 7,8-dihydroneopterin 3'-triphosphate + formate + H(+). It functions in the pathway cofactor biosynthesis; 7,8-dihydroneopterin triphosphate biosynthesis; 7,8-dihydroneopterin triphosphate from GTP: step 1/1. The sequence is that of GTP cyclohydrolase 1 from Chlorobium chlorochromatii (strain CaD3).